The following is a 310-amino-acid chain: DnaJ-like protein MG002 (310 aa).

One can recognise a J domain in the interval 1 to 66 (MNLYDLLELP…KEKYDSMLKV (66 aa)).

In Mycoplasma genitalium (strain ATCC 33530 / DSM 19775 / NCTC 10195 / G37) (Mycoplasmoides genitalium), this protein is DnaJ-like protein MG002.